The primary structure comprises 211 residues: Large ribosomal subunit protein eL13 (211 aa).

An N6-acetyllysine modification is found at Lys16. Residues Ser52, Ser77, and Ser106 each carry the phosphoserine modification. Residues Lys123 and Lys145 each participate in a glycyl lysine isopeptide (Lys-Gly) (interchain with G-Cter in SUMO2) cross-link. Lys174 participates in a covalent cross-link: Glycyl lysine isopeptide (Lys-Gly) (interchain with G-Cter in SUMO1); alternate. Residues Lys174 and Lys177 each participate in a glycyl lysine isopeptide (Lys-Gly) (interchain with G-Cter in SUMO2); alternate cross-link. Position 177 is an N6-acetyllysine; alternate (Lys177).

Belongs to the eukaryotic ribosomal protein eL13 family. As to quaternary structure, component of the 60S large ribosomal subunit (LSU).

Its subcellular location is the cytoplasm. Its function is as follows. Component of the ribosome, a large ribonucleoprotein complex responsible for the synthesis of proteins in the cell. The small ribosomal subunit (SSU) binds messenger RNAs (mRNAs) and translates the encoded message by selecting cognate aminoacyl-transfer RNA (tRNA) molecules. The large subunit (LSU) contains the ribosomal catalytic site termed the peptidyl transferase center (PTC), which catalyzes the formation of peptide bonds, thereby polymerizing the amino acids delivered by tRNAs into a polypeptide chain. The nascent polypeptides leave the ribosome through a tunnel in the LSU and interact with protein factors that function in enzymatic processing, targeting, and the membrane insertion of nascent chains at the exit of the ribosomal tunnel. As part of the LSU, it is probably required for its formation and the maturation of rRNAs. Plays a role in bone development. In Rattus norvegicus (Rat), this protein is Large ribosomal subunit protein eL13 (Rpl13).